Reading from the N-terminus, the 164-residue chain is Transcriptional repressor NrdR (164 aa).

Residues 3-34 (CPFCRHDDTQVVDSRVSEDGAAIRRRRRCPAC) fold into a zinc finger. Residues 49-139 (PSVVKKDGSR…VYRRFEDVSE (91 aa)) enclose the ATP-cone domain.

The protein belongs to the NrdR family. Zn(2+) serves as cofactor.

Functionally, negatively regulates transcription of bacterial ribonucleotide reductase nrd genes and operons by binding to NrdR-boxes. This Paraburkholderia phymatum (strain DSM 17167 / CIP 108236 / LMG 21445 / STM815) (Burkholderia phymatum) protein is Transcriptional repressor NrdR.